Consider the following 297-residue polypeptide: Acetyl-coenzyme A carboxylase carboxyl transferase subunit beta (297 aa).

Residues 1-23 (MSWIERILGRTSSSSSSSKSKVP) are disordered. The CoA carboxyltransferase N-terminal domain maps to 26 to 295 (VWTKCTSCEQ…PFKTAELIVE (270 aa)). Zn(2+) is bound by residues Cys-30, Cys-33, Cys-49, and Cys-52. A C4-type zinc finger spans residues 30–52 (CTSCEQVLYSEELKRNMHVCPKC).

The protein belongs to the AccD/PCCB family. As to quaternary structure, acetyl-CoA carboxylase is a heterohexamer composed of biotin carboxyl carrier protein (AccB), biotin carboxylase (AccC) and two subunits each of ACCase subunit alpha (AccA) and ACCase subunit beta (AccD). Zn(2+) serves as cofactor.

Its subcellular location is the cytoplasm. It carries out the reaction N(6)-carboxybiotinyl-L-lysyl-[protein] + acetyl-CoA = N(6)-biotinyl-L-lysyl-[protein] + malonyl-CoA. The protein operates within lipid metabolism; malonyl-CoA biosynthesis; malonyl-CoA from acetyl-CoA: step 1/1. Its function is as follows. Component of the acetyl coenzyme A carboxylase (ACC) complex. Biotin carboxylase (BC) catalyzes the carboxylation of biotin on its carrier protein (BCCP) and then the CO(2) group is transferred by the transcarboxylase to acetyl-CoA to form malonyl-CoA. In Actinobacillus pleuropneumoniae serotype 3 (strain JL03), this protein is Acetyl-coenzyme A carboxylase carboxyl transferase subunit beta.